The primary structure comprises 292 residues: Probable starch degradation products transport system permease protein AmyD (292 aa).

6 consecutive transmembrane segments (helical) span residues 15–35 (WLFI…PFII), 77–97 (FAVA…MLVT), 110–130 (FYLP…FIFV), 156–176 (FWGL…VIYI), 205–225 (VFPL…SNSF), and 260–280 (MAVG…ISVI). Residues 71–281 (IIFTAKFAVA…LIIAVISVIQ (211 aa)) form the ABC transmembrane type-1 domain.

The protein belongs to the binding-protein-dependent transport system permease family. MalFG subfamily.

The protein localises to the cell membrane. In terms of biological role, probably part of a binding-protein-dependent transport system starch degradation products. Probably responsible for the translocation of the substrate across the membrane. The polypeptide is Probable starch degradation products transport system permease protein AmyD (amyD) (Thermoanaerobacterium thermosulfurigenes (Clostridium thermosulfurogenes)).